Here is a 116-residue protein sequence, read N- to C-terminus: Alpha-amylase inhibitor 5 (116 aa).

5 disulfide bridges follow: C4-C55, C18-C44, C27-C77, C45-C95, and C57-C106.

This sequence belongs to the protease inhibitor I6 (cereal trypsin/alpha-amylase inhibitor) family.

Its subcellular location is the secreted. Functionally, alpha-amylase inhibitor. This chain is Alpha-amylase inhibitor 5, found in Sorghum bicolor (Sorghum).